The sequence spans 834 residues: Leucine--tRNA ligase (834 aa).

Residues 36–46 (PYPSGKIHVGH) carry the 'HIGH' region motif. Positions 602 to 606 (KMSKS) match the 'KMSKS' region motif. Residue K605 participates in ATP binding.

It belongs to the class-I aminoacyl-tRNA synthetase family.

The protein localises to the cytoplasm. It catalyses the reaction tRNA(Leu) + L-leucine + ATP = L-leucyl-tRNA(Leu) + AMP + diphosphate. This chain is Leucine--tRNA ligase, found in Rickettsia canadensis (strain McKiel).